A 149-amino-acid polypeptide reads, in one-letter code: Transcriptional repressor NrdR (149 aa).

The segment at 3–34 (CPFCSTEETKVIDSRLVSDGYQVRRRRECTKC) is a zinc-finger region. The 91-residue stretch at 49 to 139 (PKIIKNNGMR…VYLSFENINE (91 aa)) folds into the ATP-cone domain.

The protein belongs to the NrdR family. It depends on Zn(2+) as a cofactor.

Its function is as follows. Negatively regulates transcription of bacterial ribonucleotide reductase nrd genes and operons by binding to NrdR-boxes. This is Transcriptional repressor NrdR from Mannheimia succiniciproducens (strain KCTC 0769BP / MBEL55E).